The chain runs to 594 residues: Aspartate--tRNA ligase (594 aa).

Residue Glu-171 coordinates L-aspartate. Residues 195-198 (QLFK) form an aspartate region. Arg-217 is a binding site for L-aspartate. ATP contacts are provided by residues 217 to 219 (RDE) and Gln-226. An L-aspartate-binding site is contributed by His-449. Glu-483 is a binding site for ATP. Residue Arg-490 participates in L-aspartate binding. 535–538 (GLDR) contributes to the ATP binding site.

It belongs to the class-II aminoacyl-tRNA synthetase family. Type 1 subfamily. In terms of assembly, homodimer.

Its subcellular location is the cytoplasm. It carries out the reaction tRNA(Asp) + L-aspartate + ATP = L-aspartyl-tRNA(Asp) + AMP + diphosphate. Functionally, catalyzes the attachment of L-aspartate to tRNA(Asp) in a two-step reaction: L-aspartate is first activated by ATP to form Asp-AMP and then transferred to the acceptor end of tRNA(Asp). The chain is Aspartate--tRNA ligase from Proteus mirabilis (strain HI4320).